We begin with the raw amino-acid sequence, 96 residues long: Co-chaperonin GroES (96 aa).

The protein belongs to the GroES chaperonin family. In terms of assembly, heptamer of 7 subunits arranged in a ring. Interacts with the chaperonin GroEL.

It is found in the cytoplasm. Together with the chaperonin GroEL, plays an essential role in assisting protein folding. The GroEL-GroES system forms a nano-cage that allows encapsulation of the non-native substrate proteins and provides a physical environment optimized to promote and accelerate protein folding. GroES binds to the apical surface of the GroEL ring, thereby capping the opening of the GroEL channel. The polypeptide is Co-chaperonin GroES (Tremblaya princeps).